Consider the following 329-residue polypeptide: Cathepsin K (329 aa).

A signal peptide spans 1–15 (MWGLTVLLLPVVSFA). The propeptide at 16 to 114 (LYPEEILDTQ…TLYIPDWEGR (99 aa)) is activation peptide. N-linked (GlcNAc...) asparagine glycosylation occurs at Asn-103. 3 disulfide bridges follow: Cys-136-Cys-177, Cys-170-Cys-210, and Cys-269-Cys-318. Cys-139 is a catalytic residue. Residues His-276 and Asn-296 contribute to the active site.

It belongs to the peptidase C1 family.

It is found in the lysosome. The protein localises to the secreted. Its subcellular location is the apical cell membrane. It catalyses the reaction Broad proteolytic activity. With small-molecule substrates and inhibitors, the major determinant of specificity is P2, which is preferably Leu, Met &gt; Phe, and not Arg.. Thiol protease involved in osteoclastic bone resorption and may participate partially in the disorder of bone remodeling. Displays potent endoprotease activity against fibrinogen at acid pH. May play an important role in extracellular matrix degradation. Involved in the release of thyroid hormone thyroxine (T4) by limited proteolysis of TG/thyroglobulin in the thyroid follicle lumen. This Bos taurus (Bovine) protein is Cathepsin K (CTSK).